The chain runs to 518 residues: MRDFQSRFADRYNQITNSYSYSSSRQGLITGMVNVGSFFGCLLSSPVADKIGKRLSIIVWTTVYLIGIIIQVTTVPSWVQILVAKIWTGLSIGALSVITPGYQSEVAPAIMRGAIVTTYQLFITLGIFIAACINMGTHKYSHGTTAQWRISIGINLLWGIITLVGIIFLPESPRYLIAIGKDDEALKIMCYNNDLPLEHEIIQTEYHTIKSDCDAELAGGPARWPEIFNANIRYRTFLGMAVMMFQQLTGANYYFYYGTQVFRGTGMDSPYLAALIPDAVNCGCTFGAIFVLEFFGRRSPLIVGGIWQYICFFIYAAVGDRALYHKNGTSNHRAGAVMIVFSCLFIFSFSQTWAPAAYVIVGESYPVRYRSKCAAVATSANWFWNFLISFFTPFITNSIGFKYGYIFASCNLTGAAIIFLFVHETKGRTLEEINTMYASNLKPWMPHPEGYREFGREQNNATLKSHIGLNGETTELIENTDNQGDSGSFQTSTPDDSRPEQNQASATYIRPDKREPRL.

At 1-27 (MRDFQSRFADRYNQITNSYSYSSSRQG) the chain is on the cytoplasmic side. The helical transmembrane segment at 28-48 (LITGMVNVGSFFGCLLSSPVA) threads the bilayer. The Extracellular portion of the chain corresponds to 49–54 (DKIGKR). Residues 55 to 75 (LSIIVWTTVYLIGIIIQVTTV) form a helical membrane-spanning segment. Residues 76–77 (PS) lie on the Cytoplasmic side of the membrane. Residues 78–98 (WVQILVAKIWTGLSIGALSVI) form a helical membrane-spanning segment. The Extracellular portion of the chain corresponds to 99-112 (TPGYQSEVAPAIMR). A helical membrane pass occupies residues 113 to 133 (GAIVTTYQLFITLGIFIAACI). At 134 to 149 (NMGTHKYSHGTTAQWR) the chain is on the cytoplasmic side. Residues 150-170 (ISIGINLLWGIITLVGIIFLP) form a helical membrane-spanning segment. Residues 171 to 236 (ESPRYLIAIG…IFNANIRYRT (66 aa)) lie on the Extracellular side of the membrane. The chain crosses the membrane as a helical span at residues 237 to 257 (FLGMAVMMFQQLTGANYYFYY). Over 258-271 (GTQVFRGTGMDSPY) the chain is Cytoplasmic. Residues 272 to 292 (LAALIPDAVNCGCTFGAIFVL) form a helical membrane-spanning segment. The Extracellular segment spans residues 293–298 (EFFGRR). Residues 299–319 (SPLIVGGIWQYICFFIYAAVG) form a helical membrane-spanning segment. Residues 320-333 (DRALYHKNGTSNHR) are Cytoplasmic-facing. A helical membrane pass occupies residues 334-354 (AGAVMIVFSCLFIFSFSQTWA). The Extracellular segment spans residues 355-374 (PAAYVIVGESYPVRYRSKCA). The helical transmembrane segment at 375 to 395 (AVATSANWFWNFLISFFTPFI) threads the bilayer. Residues 396–402 (TNSIGFK) lie on the Cytoplasmic side of the membrane. Residues 403 to 423 (YGYIFASCNLTGAAIIFLFVH) traverse the membrane as a helical segment. Residues 424–518 (ETKGRTLEEI…IRPDKREPRL (95 aa)) lie on the Extracellular side of the membrane. Over residues 477–506 (IENTDNQGDSGSFQTSTPDDSRPEQNQASA) the composition is skewed to polar residues. Positions 477-518 (IENTDNQGDSGSFQTSTPDDSRPEQNQASATYIRPDKREPRL) are disordered.

It belongs to the major facilitator superfamily. Sugar transporter (TC 2.A.1.1) family.

Its subcellular location is the membrane. The protein is Probable high-affinity hexose transporter ght7 (ght7) of Schizosaccharomyces pombe (strain 972 / ATCC 24843) (Fission yeast).